The primary structure comprises 368 residues: NAD(P)H-quinone oxidoreductase subunit 1, chloroplastic (368 aa).

9 consecutive transmembrane segments (helical) span residues 27–47 (FLWIIFSILILMLGVTIGVLV), 97–117 (WLFNIGPILVLIPVFLSYLVI), 130–150 (IGVFFWIAVSSVVPLGLLMAG), 166–186 (AAQSISYEIPLALSVLSIALL), 204–224 (FLSWNLWRQPIGFIVFFIASL), 249–269 (YSGMKFAFFYLASYLNLLVSS), 270–290 (LFVTILYLGGWHFSIPFFSLF), 305–325 (VISIIIGIVITLVKSYLFLFI), and 348–368 (FLLPIALGNLLLTTSFQLFLL).

This sequence belongs to the complex I subunit 1 family. NDH is composed of at least 16 different subunits, 5 of which are encoded in the nucleus.

Its subcellular location is the plastid. The protein resides in the chloroplast thylakoid membrane. The catalysed reaction is a plastoquinone + NADH + (n+1) H(+)(in) = a plastoquinol + NAD(+) + n H(+)(out). The enzyme catalyses a plastoquinone + NADPH + (n+1) H(+)(in) = a plastoquinol + NADP(+) + n H(+)(out). In terms of biological role, NDH shuttles electrons from NAD(P)H:plastoquinone, via FMN and iron-sulfur (Fe-S) centers, to quinones in the photosynthetic chain and possibly in a chloroplast respiratory chain. The immediate electron acceptor for the enzyme in this species is believed to be plastoquinone. Couples the redox reaction to proton translocation, and thus conserves the redox energy in a proton gradient. In Marchantia polymorpha (Common liverwort), this protein is NAD(P)H-quinone oxidoreductase subunit 1, chloroplastic.